The chain runs to 542 residues: Apolipoprotein N-acyltransferase (542 aa).

6 consecutive transmembrane segments (helical) span residues 24 to 44 (VVAS…GLFA), 54 to 74 (VWCI…SWML), 85 to 105 (FVWG…SCLV), 116 to 136 (ALVW…YGLL), 160 to 180 (FFGW…CFAV), and 190 to 210 (GLWL…YEYL). Residues 220–499 (LRVAIVQPGY…TGVLQVSVPL (280 aa)) form the CN hydrolase domain. Glutamate 264 serves as the catalytic Proton acceptor. The active site involves lysine 349. Residue cysteine 404 is the Nucleophile of the active site. Residues 509 to 529 (LGDAPLLLIAVCSVIGAIAYF) form a helical membrane-spanning segment.

This sequence belongs to the CN hydrolase family. Apolipoprotein N-acyltransferase subfamily.

The protein localises to the cell inner membrane. The catalysed reaction is N-terminal S-1,2-diacyl-sn-glyceryl-L-cysteinyl-[lipoprotein] + a glycerophospholipid = N-acyl-S-1,2-diacyl-sn-glyceryl-L-cysteinyl-[lipoprotein] + a 2-acyl-sn-glycero-3-phospholipid + H(+). The protein operates within protein modification; lipoprotein biosynthesis (N-acyl transfer). Its function is as follows. Catalyzes the phospholipid dependent N-acylation of the N-terminal cysteine of apolipoprotein, the last step in lipoprotein maturation. The protein is Apolipoprotein N-acyltransferase of Chlamydia trachomatis serovar D (strain ATCC VR-885 / DSM 19411 / UW-3/Cx).